The following is a 446-amino-acid chain: Gamma-glutamyl phosphate reductase (446 aa).

It belongs to the gamma-glutamyl phosphate reductase family.

The protein localises to the cytoplasm. It carries out the reaction L-glutamate 5-semialdehyde + phosphate + NADP(+) = L-glutamyl 5-phosphate + NADPH + H(+). It participates in amino-acid biosynthesis; L-proline biosynthesis; L-glutamate 5-semialdehyde from L-glutamate: step 2/2. Functionally, catalyzes the NADPH-dependent reduction of L-glutamate 5-phosphate into L-glutamate 5-semialdehyde and phosphate. The product spontaneously undergoes cyclization to form 1-pyrroline-5-carboxylate. This chain is Gamma-glutamyl phosphate reductase, found in Sulfurihydrogenibium sp. (strain YO3AOP1).